The chain runs to 296 residues: Phosphoribosylaminoimidazole-succinocarboxamide synthase (296 aa).

Belongs to the SAICAR synthetase family.

The enzyme catalyses 5-amino-1-(5-phospho-D-ribosyl)imidazole-4-carboxylate + L-aspartate + ATP = (2S)-2-[5-amino-1-(5-phospho-beta-D-ribosyl)imidazole-4-carboxamido]succinate + ADP + phosphate + 2 H(+). It functions in the pathway purine metabolism; IMP biosynthesis via de novo pathway; 5-amino-1-(5-phospho-D-ribosyl)imidazole-4-carboxamide from 5-amino-1-(5-phospho-D-ribosyl)imidazole-4-carboxylate: step 1/2. The chain is Phosphoribosylaminoimidazole-succinocarboxamide synthase from Pelobacter propionicus (strain DSM 2379 / NBRC 103807 / OttBd1).